We begin with the raw amino-acid sequence, 521 residues long: Glutamyl-tRNA(Gln) amidotransferase subunit B, mitochondrial (521 aa).

The N-terminal 22 residues, 1-22 (MIALLRWGIARPSAPLRWSRCF), are a transit peptide targeting the mitochondrion.

Belongs to the GatB/GatE family. GatB subfamily. In terms of assembly, subunit of the heterotrimeric GatCAB amidotransferase (AdT) complex, composed of A, B and C subunits.

It is found in the mitochondrion. It catalyses the reaction L-glutamyl-tRNA(Gln) + L-glutamine + ATP + H2O = L-glutaminyl-tRNA(Gln) + L-glutamate + ADP + phosphate + H(+). In terms of biological role, allows the formation of correctly charged Gln-tRNA(Gln) through the transamidation of misacylated Glu-tRNA(Gln) in the mitochondria. The reaction takes place in the presence of glutamine and ATP through an activated gamma-phospho-Glu-tRNA(Gln). The polypeptide is Glutamyl-tRNA(Gln) amidotransferase subunit B, mitochondrial (Cryptococcus neoformans var. neoformans serotype D (strain JEC21 / ATCC MYA-565) (Filobasidiella neoformans)).